A 341-amino-acid polypeptide reads, in one-letter code: Hyaluronan and proteoglycan link protein 2 (341 aa).

The first 27 residues, 1 to 27, serve as a signal peptide directing secretion; the sequence is MPSRIPLPAFCCFLLPWAFTSFHKALG. Residues 35–143 form the Ig-like V-type domain; that stretch reads PHYLLPPIHE…GIEDESVALT (109 aa). 5 cysteine pairs are disulfide-bonded: cysteine 58-cysteine 129, cysteine 171-cysteine 241, cysteine 195-cysteine 216, cysteine 266-cysteine 337, and cysteine 291-cysteine 312. Link domains are found at residues 149–243 and 246–339; these read VVFP…FCFT and LAGQ…YCYA.

It belongs to the HAPLN family. As to expression, brain. Predominantly expressed by neurons. Colocalizes with versican V2 in developing and adult cerebellar white matter and at the nodes of Ranvier.

The protein localises to the secreted. It localises to the extracellular space. Its subcellular location is the extracellular matrix. In terms of biological role, mediates a firm binding of versican V2 to hyaluronic acid. May play a pivotal role in the formation of the hyaluronan-associated matrix in the central nervous system (CNS) which facilitates neuronal conduction and general structural stabilization. Binds to hyaluronic acid. The sequence is that of Hyaluronan and proteoglycan link protein 2 (Hapln2) from Mus musculus (Mouse).